A 335-amino-acid chain; its full sequence is Erlin-2 (335 aa).

Residues 1–2 are Cytoplasmic-facing; the sequence is MS. Residues 3-23 form a helical membrane-spanning segment; that stretch reads HAGAIAAIGVALIAAALFSAI. Residues 24 to 335 lie on the Lumenal side of the membrane; it reads HKIEEGHVGV…ALNEPAVGDE (312 aa). Asn-106 carries an N-linked (GlcNAc...) asparagine glycan. Residues 310–321 are compositionally biased toward polar residues; sequence AGPSVQSATLLQ. The segment at 310-335 is disordered; the sequence is AGPSVQSATLLQDDSPALNEPAVGDE.

Belongs to the band 7/mec-2 family.

It is found in the endoplasmic reticulum membrane. Functionally, mediates the endoplasmic reticulum-associated degradation (ERAD) of inositol 1,4,5-trisphosphate receptors (IP3Rs). Promotes sterol-accelerated ERAD of HMGCR. Involved in regulation of cellular cholesterol homeostasis by regulation the SREBP signaling pathway. The polypeptide is Erlin-2 (erlin2) (Xenopus tropicalis (Western clawed frog)).